We begin with the raw amino-acid sequence, 144 residues long: Large ribosomal subunit protein uL15 (144 aa).

The tract at residues 1 to 52 (MRLNSLSPAEGAKHSAKRLGRGIGSGLGKTGGRGHKGQKSRTGGGVRRGFEG) is disordered. A compositionally biased stretch (gly residues) spans 21–31 (RGIGSGLGKTG).

This sequence belongs to the universal ribosomal protein uL15 family. As to quaternary structure, part of the 50S ribosomal subunit.

Binds to the 23S rRNA. The chain is Large ribosomal subunit protein uL15 from Actinobacillus pleuropneumoniae serotype 5b (strain L20).